The following is a 402-amino-acid chain: Acetyl-CoA acetyltransferase (402 aa).

Cys-90 (acyl-thioester intermediate) is an active-site residue. Residues Tyr-185 and Lys-230 each contribute to the CoA site. Tyr-185 lines the K(+) pocket. Ala-250 provides a ligand contact to K(+). Residue Ser-251 participates in CoA binding. Position 348 (Val-348) interacts with K(+). Active-site proton acceptor residues include His-352 and Cys-382.

Belongs to the thiolase-like superfamily. Thiolase family. In terms of assembly, homotetramer.

Its subcellular location is the cytoplasm. The protein localises to the cytosol. The catalysed reaction is 2 acetyl-CoA = acetoacetyl-CoA + CoA. Its pathway is metabolic intermediate biosynthesis; (R)-mevalonate biosynthesis; (R)-mevalonate from acetyl-CoA: step 1/3. Its function is as follows. Acetyl-CoA acetyltransferase; part of the first module of ergosterol biosynthesis pathway that includes the early steps of the pathway, conserved across all eukaryotes, and which results in the formation of mevalonate from acetyl-coenzyme A (acetyl-CoA). ERG10 catalyzes the formation of acetoacetyl-CoA from acetyl-CoA. The first module starts with the action of the cytosolic acetyl-CoA acetyltransferase ERG10 that catalyzes the formation of acetoacetyl-CoA. The hydroxymethylglutaryl-CoA synthase ERG13 then condenses acetyl-CoA with acetoacetyl-CoA to form HMG-CoA. The 3-hydroxy-3-methylglutaryl-coenzyme A (HMG-CoA) reductase HMG1 finally reduces HMG-CoA to produce mevalonate. This Candida albicans (strain SC5314 / ATCC MYA-2876) (Yeast) protein is Acetyl-CoA acetyltransferase.